A 463-amino-acid chain; its full sequence is tRNA dimethylallyltransferase 9 (463 aa).

Residue 57–64 (GPTGAGKS) coordinates ATP. 59 to 64 (TGAGKS) provides a ligand contact to substrate. Residues 82–85 (DSVQ) form an interaction with substrate tRNA region.

Belongs to the IPP transferase family. Mg(2+) serves as cofactor. As to expression, expressed ubiquitously, with highest expression in proliferating tissues.

The protein resides in the cytoplasm. It catalyses the reaction adenosine(37) in tRNA + dimethylallyl diphosphate = N(6)-dimethylallyladenosine(37) in tRNA + diphosphate. Functionally, catalyzes the transfer of a dimethylallyl group onto the adenine at position 37 in tRNAs that read codons beginning with uridine, leading to the formation of N6-(dimethylallyl)adenosine (i(6)A). Involved in the cis-type cytokinin biosynthesis. The chain is tRNA dimethylallyltransferase 9 (IPT9) from Arabidopsis thaliana (Mouse-ear cress).